The following is a 214-amino-acid chain: External core antigen (214 aa).

The first 19 residues, 1–19, serve as a signal peptide directing secretion; it reads MQLFHLCLIISCTCPTLQA. The interval 25–27 is HBEAG; it reads GWL. The segment at 164 to 214 is disordered; it reads PNAPILSTLPETTVVRRRDRGRSPRRRTPSPRRRRSQSPRRRRSQSRESQC. A compositionally biased stretch (basic residues) spans 178–207; that stretch reads VRRRDRGRSPRRRTPSPRRRRSQSPRRRRS. A 1; half-length repeat occupies 186-192; that stretch reads SPRRRTP. Positions 186–208 are 3 X 8 AA repeats of S-P-R-R-R-R-S-Q; the sequence is SPRRRTPSPRRRRSQSPRRRRSQ. A propeptide spanning residues 186-214 is cleaved from the precursor; sequence SPRRRTPSPRRRRSQSPRRRRSQSRESQC. 2 tandem repeats follow at residues 193 to 200 and 201 to 208.

Belongs to the orthohepadnavirus precore antigen family. As to quaternary structure, homodimerizes. In terms of processing, phosphorylated. Post-translationally, cleaved by host furin.

The protein resides in the secreted. It localises to the host nucleus. In terms of biological role, may regulate immune response to the intracellular capsid in acting as a T-cell tolerogen, by having an immunoregulatory effect which prevents destruction of infected cells by cytotoxic T-cells. This immune regulation may predispose to chronicity during perinatal infections and prevent severe liver injury during adult infections. The sequence is that of External core antigen from Homo sapiens (Human).